Consider the following 99-residue polypeptide: DNA-directed RNA polymerase subunit omega (99 aa).

It belongs to the RNA polymerase subunit omega family. As to quaternary structure, the RNAP catalytic core consists of 2 alpha, 1 beta, 1 beta' and 1 omega subunit. When a sigma factor is associated with the core the holoenzyme is formed, which can initiate transcription.

It carries out the reaction RNA(n) + a ribonucleoside 5'-triphosphate = RNA(n+1) + diphosphate. Its function is as follows. Promotes RNA polymerase assembly. Latches the N- and C-terminal regions of the beta' subunit thereby facilitating its interaction with the beta and alpha subunits. The protein is DNA-directed RNA polymerase subunit omega of Thermus thermophilus (strain ATCC BAA-163 / DSM 7039 / HB27).